The chain runs to 219 residues: Small ribosomal subunit protein uS3 (219 aa).

The KH type-2 domain maps to 38–106; the sequence is IREYINVRLK…RVHINILEVK (69 aa).

Belongs to the universal ribosomal protein uS3 family. As to quaternary structure, part of the 30S ribosomal subunit. Forms a tight complex with proteins S10 and S14.

Functionally, binds the lower part of the 30S subunit head. Binds mRNA in the 70S ribosome, positioning it for translation. This is Small ribosomal subunit protein uS3 from Bacillus thuringiensis (strain Al Hakam).